We begin with the raw amino-acid sequence, 222 residues long: 7-cyano-7-deazaguanine synthase (222 aa).

Residue 7 to 17 (LSGGLDSSTVL) participates in ATP binding. C191, C199, C202, and C205 together coordinate Zn(2+).

It belongs to the QueC family. Zn(2+) serves as cofactor.

The enzyme catalyses 7-carboxy-7-deazaguanine + NH4(+) + ATP = 7-cyano-7-deazaguanine + ADP + phosphate + H2O + H(+). It functions in the pathway purine metabolism; 7-cyano-7-deazaguanine biosynthesis. In terms of biological role, catalyzes the ATP-dependent conversion of 7-carboxy-7-deazaguanine (CDG) to 7-cyano-7-deazaguanine (preQ(0)). The chain is 7-cyano-7-deazaguanine synthase from Trichodesmium erythraeum (strain IMS101).